A 599-amino-acid chain; its full sequence is Proteasome-associated ATPase (599 aa).

The tract at residues 1–22 is disordered; that stretch reads MPHGHPGSQPDEGGELSNGSSS. Positions 21–97 form a coiled coil; it reads SSGELTAQIR…LREEVDRLAQ (77 aa). Position 286-291 (286-291) interacts with ATP; that stretch reads GCGKTL. The docks into pockets in the proteasome alpha-ring stretch occupies residues 598-599; sequence YL.

It belongs to the AAA ATPase family. In terms of assembly, homohexamer. Assembles into a hexameric ring structure that caps the 20S proteasome core. Strongly interacts with the prokaryotic ubiquitin-like protein Pup through a hydrophobic interface; the interacting region of ARC lies in its N-terminal coiled-coil domain. There is one Pup binding site per ARC hexamer ring. Upon ATP-binding, the C-terminus of ARC interacts with the alpha-rings of the proteasome core, possibly by binding to the intersubunit pockets.

Its pathway is protein degradation; proteasomal Pup-dependent pathway. Functionally, ATPase which is responsible for recognizing, binding, unfolding and translocation of pupylated proteins into the bacterial 20S proteasome core particle. May be essential for opening the gate of the 20S proteasome via an interaction with its C-terminus, thereby allowing substrate entry and access to the site of proteolysis. Thus, the C-termini of the proteasomal ATPase may function like a 'key in a lock' to induce gate opening and therefore regulate proteolysis. This is Proteasome-associated ATPase from Actinosynnema mirum (strain ATCC 29888 / DSM 43827 / JCM 3225 / NBRC 14064 / NCIMB 13271 / NRRL B-12336 / IMRU 3971 / 101).